Reading from the N-terminus, the 261-residue chain is Triosephosphate isomerase (261 aa).

Positions 11 and 13 each coordinate D-glyceraldehyde 3-phosphate. Histidine 102 functions as the Electrophile in the catalytic mechanism. Glutamate 174 acts as the Proton acceptor in catalysis. Glycine 180, leucine 239, and glycine 241 together coordinate D-glyceraldehyde 3-phosphate.

The protein belongs to the triosephosphate isomerase family. Homodimer.

The catalysed reaction is D-glyceraldehyde 3-phosphate = dihydroxyacetone phosphate. Its pathway is carbohydrate biosynthesis; gluconeogenesis. It functions in the pathway carbohydrate degradation; glycolysis; D-glyceraldehyde 3-phosphate from glycerone phosphate: step 1/1. Functionally, catalyzes the interconversion of glyceraldehyde 3-phosphate and dihydroxyacetone phosphate in the glycolytic and gluconeogenic pathways. The polypeptide is Triosephosphate isomerase (Entamoeba histolytica (strain ATCC 30459 / HM-1:IMSS / ABRM)).